A 293-amino-acid polypeptide reads, in one-letter code: Ethanolamine ammonia-lyase small subunit (293 aa).

2 residues coordinate adenosylcob(III)alamin: valine 207 and glutamate 228.

Belongs to the EutC family. The basic unit is a heterodimer which dimerizes to form tetramers. The heterotetramers trimerize; 6 large subunits form a core ring with 6 small subunits projecting outwards. Requires adenosylcob(III)alamin as cofactor.

It localises to the bacterial microcompartment. It catalyses the reaction ethanolamine = acetaldehyde + NH4(+). It functions in the pathway amine and polyamine degradation; ethanolamine degradation. Functionally, catalyzes the deamination of various vicinal amino-alcohols to oxo compounds. Allows this organism to utilize ethanolamine as the sole source of nitrogen and carbon in the presence of external vitamin B12. The protein is Ethanolamine ammonia-lyase small subunit of Listeria monocytogenes serotype 4a (strain HCC23).